A 440-amino-acid chain; its full sequence is MSERKQILNCIDDPQQALIMLKRISARTSLEVQENAISSVQNILTEVKQLGDEALFRLTEKFDGFIPKPLEITPEQTLEAWEKTPTPLQEALQLAKNRIEAFHKYQIPKDFLKEGIHGELLGKNWSPVEKAGIYIPGGRAAYPSTVLMNAVPALVAGVNEIIMVSPAGPNGQLNRTVLAAAYIAGIKKIFRIGGAQAIGALSYGTQTIPRVDVISGPGNLYVTLAKKLVYGQVGIDSLAGPSEVLIIADHSADVEQVATDLLAQAEHDPLAASILLTTESNLAKKINLEIENQLKDHPRSAICRKSLKDWGLIVICKDIKSCAALSNSFAPEHLELLIEKPFEFISQIKNAGAIFLGEWSPEATGDYLAGPNHTLPTSGTARFSSALSVETFMKSTSIINFNQAALNKTSAAIMELANSEGLHSHSRSIEIRRSKPSSDD.

NAD(+) contacts are provided by Y134, Q196, and N219. S242, Q264, and H267 together coordinate substrate. Residues Q264 and H267 each contribute to the Zn(2+) site. Catalysis depends on proton acceptor residues E332 and H333. Substrate-binding residues include H333, D366, E420, and H425. D366 provides a ligand contact to Zn(2+). H425 contacts Zn(2+).

The protein belongs to the histidinol dehydrogenase family. Zn(2+) serves as cofactor.

The catalysed reaction is L-histidinol + 2 NAD(+) + H2O = L-histidine + 2 NADH + 3 H(+). It participates in amino-acid biosynthesis; L-histidine biosynthesis; L-histidine from 5-phospho-alpha-D-ribose 1-diphosphate: step 9/9. Catalyzes the sequential NAD-dependent oxidations of L-histidinol to L-histidinaldehyde and then to L-histidine. This Prochlorococcus marinus (strain SARG / CCMP1375 / SS120) protein is Histidinol dehydrogenase.